A 125-amino-acid chain; its full sequence is Large ribosomal subunit protein bL12 (125 aa).

The protein belongs to the bacterial ribosomal protein bL12 family. In terms of assembly, homodimer. Part of the ribosomal stalk of the 50S ribosomal subunit. Forms a multimeric L10(L12)X complex, where L10 forms an elongated spine to which 2 to 4 L12 dimers bind in a sequential fashion. Binds GTP-bound translation factors.

Its function is as follows. Forms part of the ribosomal stalk which helps the ribosome interact with GTP-bound translation factors. Is thus essential for accurate translation. The polypeptide is Large ribosomal subunit protein bL12 (Polaromonas naphthalenivorans (strain CJ2)).